Reading from the N-terminus, the 467-residue chain is ATP-dependent protease ATPase subunit HslU (467 aa).

ATP is bound by residues I18, 60–65 (GVGKTE), D280, E345, and R417.

This sequence belongs to the ClpX chaperone family. HslU subfamily. In terms of assembly, a double ring-shaped homohexamer of HslV is capped on each side by a ring-shaped HslU homohexamer. The assembly of the HslU/HslV complex is dependent on binding of ATP.

It localises to the cytoplasm. ATPase subunit of a proteasome-like degradation complex; this subunit has chaperone activity. The binding of ATP and its subsequent hydrolysis by HslU are essential for unfolding of protein substrates subsequently hydrolyzed by HslV. HslU recognizes the N-terminal part of its protein substrates and unfolds these before they are guided to HslV for hydrolysis. This is ATP-dependent protease ATPase subunit HslU from Lactobacillus helveticus (strain DPC 4571).